The primary structure comprises 142 residues: Transcriptional regulator MraZ (142 aa).

SpoVT-AbrB domains are found at residues 5-51 (ASSL…PRPE) and 77-120 (AMDV…DKAT).

The protein belongs to the MraZ family. Forms oligomers.

Its subcellular location is the cytoplasm. The protein localises to the nucleoid. The chain is Transcriptional regulator MraZ from Acidovorax ebreus (strain TPSY) (Diaphorobacter sp. (strain TPSY)).